Reading from the N-terminus, the 634-residue chain is Transcription termination factor FttA (634 aa).

The KHa stretch occupies residues 4–69; sequence EEVLENIRKE…ISIRPDPSVL (66 aa). Residues 70-137 are KHb; the sequence is VEPEIAKQKI…WAPKPVRTPP (68 aa). The segment at 179–381 is metallo-beta-lactamase N-terminus; that stretch reads WIRVSFLGGA…LIIESTYGAY (203 aa). Zn(2+) is bound by residues H240, H242, D244, H245, H327, and D350. Residues 382–575 form a beta-Casp region; the sequence is DDVLPEREEA…LQVYTIEGFS (194 aa). Positions 576–634 are metallo-beta-lactamase C-terminus; that stretch reads GHSDRKQLIKYIRRLKPSPEKIIMVHGEESKCLDFADTVRRLFKKQTYVPMNLDAIRVK. H601 is a Zn(2+) binding site.

The protein belongs to the metallo-beta-lactamase superfamily. RNA-metabolizing metallo-beta-lactamase-like family. FttA subfamily. In terms of assembly, homodimer. Interacts with RNA polymerase (RNAP), interacts with the Spt4-Spt5 complex. It depends on Zn(2+) as a cofactor.

With respect to regulation, optimal NaCl concentration is 100 mM for nuclease activity on RNA. In terms of biological role, terminates transcription on the whole genome. Termination is linked to FttA-mediated RNA cleavage and does not require NTP hydrolysis. Cleaves endonucleolytically at the RNA exit channel of RNA polymerase (RNAP); the 5'-3' exonuclease activity of this protein degrades the nascent RNA released from RNAP. An endoribonuclease with no apparent exonuclease activity, has low activity on single-stranded DNA (endodeoxyribonuclease, endoDNase). In Methanocaldococcus jannaschii (strain ATCC 43067 / DSM 2661 / JAL-1 / JCM 10045 / NBRC 100440) (Methanococcus jannaschii), this protein is Transcription termination factor FttA.